The sequence spans 347 residues: Phosphoribosylformylglycinamidine cyclo-ligase (347 aa).

This sequence belongs to the AIR synthase family.

The protein localises to the cytoplasm. It catalyses the reaction 2-formamido-N(1)-(5-O-phospho-beta-D-ribosyl)acetamidine + ATP = 5-amino-1-(5-phospho-beta-D-ribosyl)imidazole + ADP + phosphate + H(+). It participates in purine metabolism; IMP biosynthesis via de novo pathway; 5-amino-1-(5-phospho-D-ribosyl)imidazole from N(2)-formyl-N(1)-(5-phospho-D-ribosyl)glycinamide: step 2/2. The chain is Phosphoribosylformylglycinamidine cyclo-ligase from Dechloromonas aromatica (strain RCB).